Consider the following 118-residue polypeptide: UPF0212 protein HQ_2663A (118 aa).

This sequence belongs to the UPF0212 family.

This Haloquadratum walsbyi (strain DSM 16790 / HBSQ001) protein is UPF0212 protein HQ_2663A.